The primary structure comprises 179 residues: Arginine repressor (179 aa).

The protein belongs to the ArgR family.

Its subcellular location is the cytoplasm. Its pathway is amino-acid biosynthesis; L-arginine biosynthesis [regulation]. In terms of biological role, regulates arginine biosynthesis genes. This is Arginine repressor from Renibacterium salmoninarum (strain ATCC 33209 / DSM 20767 / JCM 11484 / NBRC 15589 / NCIMB 2235).